A 250-amino-acid polypeptide reads, in one-letter code: 5'-nucleotidase SurE (250 aa).

A divalent metal cation is bound by residues Asp8, Asp9, Ser40, and Asn92.

The protein belongs to the SurE nucleotidase family. The cofactor is a divalent metal cation.

Its subcellular location is the cytoplasm. It catalyses the reaction a ribonucleoside 5'-phosphate + H2O = a ribonucleoside + phosphate. Nucleotidase that shows phosphatase activity on nucleoside 5'-monophosphates. The sequence is that of 5'-nucleotidase SurE from Dichelobacter nodosus (strain VCS1703A).